The following is a 242-amino-acid chain: Tryptophan synthase alpha chain (242 aa).

Active-site proton acceptor residues include Glu-31 and Asp-42.

The protein belongs to the TrpA family. In terms of assembly, tetramer of two alpha and two beta chains.

The catalysed reaction is (1S,2R)-1-C-(indol-3-yl)glycerol 3-phosphate + L-serine = D-glyceraldehyde 3-phosphate + L-tryptophan + H2O. Its pathway is amino-acid biosynthesis; L-tryptophan biosynthesis; L-tryptophan from chorismate: step 5/5. Its function is as follows. The alpha subunit is responsible for the aldol cleavage of indoleglycerol phosphate to indole and glyceraldehyde 3-phosphate. The sequence is that of Tryptophan synthase alpha chain from Staphylococcus aureus (strain Mu3 / ATCC 700698).